Consider the following 485-residue polypeptide: Probable cobyric acid synthase (485 aa).

The 186-residue stretch at 250–435 (EIEVAVIRLP…LHGLFDNRNI (186 aa)) folds into the GATase cobBQ-type domain. The active-site Nucleophile is the Cys328. The active site involves His427.

The protein belongs to the CobB/CobQ family. CobQ subfamily.

Its pathway is cofactor biosynthesis; adenosylcobalamin biosynthesis. Catalyzes amidations at positions B, D, E, and G on adenosylcobyrinic A,C-diamide. NH(2) groups are provided by glutamine, and one molecule of ATP is hydrogenolyzed for each amidation. The polypeptide is Probable cobyric acid synthase (Methanosarcina mazei (strain ATCC BAA-159 / DSM 3647 / Goe1 / Go1 / JCM 11833 / OCM 88) (Methanosarcina frisia)).